Consider the following 82-residue polypeptide: Acyl carrier protein (82 aa).

The 76-residue stretch at P4–L79 folds into the Carrier domain. At S39 the chain carries O-(pantetheine 4'-phosphoryl)serine.

This sequence belongs to the acyl carrier protein (ACP) family. 4'-phosphopantetheine is transferred from CoA to a specific serine of apo-ACP by AcpS. This modification is essential for activity because fatty acids are bound in thioester linkage to the sulfhydryl of the prosthetic group.

Its subcellular location is the cytoplasm. The protein operates within lipid metabolism; fatty acid biosynthesis. Functionally, carrier of the growing fatty acid chain in fatty acid biosynthesis. This Roseiflexus sp. (strain RS-1) protein is Acyl carrier protein.